The following is a 291-amino-acid chain: Porphobilinogen deaminase (291 aa).

S-(dipyrrolylmethanemethyl)cysteine is present on C237.

The protein belongs to the HMBS family. As to quaternary structure, monomer. It depends on dipyrromethane as a cofactor.

The catalysed reaction is 4 porphobilinogen + H2O = hydroxymethylbilane + 4 NH4(+). It functions in the pathway porphyrin-containing compound metabolism; protoporphyrin-IX biosynthesis; coproporphyrinogen-III from 5-aminolevulinate: step 2/4. Functionally, tetrapolymerization of the monopyrrole PBG into the hydroxymethylbilane pre-uroporphyrinogen in several discrete steps. This is Porphobilinogen deaminase from Clostridium perfringens (strain 13 / Type A).